Reading from the N-terminus, the 780-residue chain is ATP-dependent 6-phosphofructokinase, muscle type (780 aa).

N-acetylthreonine is present on threonine 2. Residues 2-390 form an N-terminal catalytic PFK domain 1 region; it reads THEEHHAAKT…NWEVYKLLAH (389 aa). Residues glycine 25, 88 to 89, and 118 to 121 contribute to the ATP site; these read RC and GDGS. Mg(2+) is bound at residue aspartate 119. A Phosphoserine modification is found at serine 133. Residues 164–166, arginine 201, 208–210, glutamate 264, arginine 292, and 298–301 each bind substrate; these read SID, MGR, and HVQR. Aspartate 166 (proton acceptor) is an active-site residue. Serine 377 carries the post-translational modification Phosphoserine. The tract at residues 391-401 is interdomain linker; that stretch reads VRPPVSKGGLH. The C-terminal regulatory PFK domain 2 stretch occupies residues 402-780; the sequence is TVAVMNVGAP…SRKRSGEAAV (379 aa). Residues arginine 471 and 528-532 each bind beta-D-fructose 2,6-bisphosphate; that span reads TVSNN. Residue serine 530 is glycosylated (O-linked (GlcNAc) serine). Lysine 557 carries the N6-(2-hydroxyisobutyryl)lysine modification. Residues arginine 566, 573 to 575, glutamate 629, arginine 655, and 661 to 664 contribute to the beta-D-fructose 2,6-bisphosphate site; these read MGG and HMQQ. The residue at position 667 (serine 667) is a Phosphoserine. Position 735 (arginine 735) interacts with beta-D-fructose 2,6-bisphosphate. Serine 775 bears the Phosphoserine mark.

It belongs to the phosphofructokinase type A (PFKA) family. ATP-dependent PFK group I subfamily. Eukaryotic two domain clade 'E' sub-subfamily. As to quaternary structure, homo- and heterotetramers. Phosphofructokinase (PFK) enzyme functions as a tetramer composed of different combinations of 3 types of subunits, called PFKM (M), PFKL (L) and PFKP (P). The composition of the PFK tetramer differs according to the tissue type it is present in. The kinetic and regulatory properties of the tetrameric enzyme are dependent on the subunit composition, hence can vary across tissues. Isoform 2 and isoform 3 interact (via N-terminal testis-specific region) with GSTM5. Isoform 2 and isoform 3 interact (via C-terminus) with HK1 (via N-terminal spermatogenic cell-specific region). Mg(2+) serves as cofactor. GlcNAcylation decreases enzyme activity. As to expression, isoform 1 is expressed in skeletal muscle (at protein level). Isoform 2 and isoform 3 are testis-specific and are detected in quiescent sperm (at protein level). They are first detected in the cytoplasm of round spermatids and subsequently in the flagellum of elongated spermatids extending into the seminiferous tubule lumen (at protein level). Isoform 2 is expressed at higher level than isoform 3 in testis.

The protein localises to the cytoplasm. It is found in the cell projection. It localises to the cilium. The protein resides in the flagellum. It catalyses the reaction beta-D-fructose 6-phosphate + ATP = beta-D-fructose 1,6-bisphosphate + ADP + H(+). It functions in the pathway carbohydrate degradation; glycolysis; D-glyceraldehyde 3-phosphate and glycerone phosphate from D-glucose: step 3/4. Its activity is regulated as follows. Allosterically activated by ADP, AMP, or fructose 2,6-bisphosphate, and allosterically inhibited by ATP or citrate. Functionally, catalyzes the phosphorylation of D-fructose 6-phosphate to fructose 1,6-bisphosphate by ATP, the first committing step of glycolysis. In Mus musculus (Mouse), this protein is ATP-dependent 6-phosphofructokinase, muscle type (Pfkm).